The primary structure comprises 276 residues: Nickel import system permease protein NikC (276 aa).

Transmembrane regions (helical) follow at residues 10–30 (LIFF…FFVS), 73–93 (LFVT…LGLF), 108–128 (FIDV…ASFF), 186–206 (IIPA…LYIS), and 238–258 (IMLI…NLTG). Residues 69-258 (ARSTLFVTVL…ITILIFNLTG (190 aa)) form the ABC transmembrane type-1 domain.

This sequence belongs to the binding-protein-dependent transport system permease family. OppBC subfamily. The complex is composed of two ATP-binding proteins (NikD and NikE), two transmembrane proteins (NikB and NikC) and a solute-binding protein (NikA).

It is found in the cell membrane. In terms of biological role, part of the ABC transporter complex NikABCDE (Opp2) involved in nickel import. Probably responsible for the translocation of the substrate across the membrane. The sequence is that of Nickel import system permease protein NikC from Staphylococcus aureus (strain Mu50 / ATCC 700699).